Consider the following 130-residue polypeptide: uncharacterized protein (130 aa).

The segment at 85-116 is disordered; the sequence is NDSDDDCSENDSDGDCSENDSDNDYSENESDC.

It belongs to the mimivirus L5 family.

This is an uncharacterized protein from Acanthamoeba polyphaga mimivirus (APMV).